Here is a 182-residue protein sequence, read N- to C-terminus: MNKQPEDWLDDVPENKNDDDDEIIWVSKSEIKRDAEALKDLGTELVDLGKNALERIPLDEDLLAAIELAQKIKKEGRRRQIQLIGKMLRARDVEPIQTALDKLKNRHNQQVSLFHKLETLRDRLIAEGDDAIPTVLELYPDADRQQLRSLVRNAQKEQAANKPPKSFRQIFSYLRELAEKQQ.

It belongs to the DarP family.

It localises to the cytoplasm. Member of a network of 50S ribosomal subunit biogenesis factors which assembles along the 30S-50S interface, preventing incorrect 23S rRNA structures from forming. Promotes peptidyl transferase center (PTC) maturation. This Yersinia pseudotuberculosis serotype O:1b (strain IP 31758) protein is Dual-action ribosomal maturation protein DarP.